The primary structure comprises 402 residues: Endoplasmic reticulum junction formation protein lunapark-B (402 aa).

Topologically, residues 1–45 (MGAIISRWKTKPSTVELLESLDKDIKDLEEFRAKNQRLLKLWVGR) are cytoplasmic. A helical transmembrane segment spans residues 46–66 (LLFYSSALYLLTCLCVYYLYF). The Lumenal portion of the chain corresponds to 67 to 77 (PQQWGARLITA). The helical transmembrane segment at 78–98 (LPLLAFPALVLLLRKMLIFLF) threads the bilayer. Residues 99 to 402 (SKRTERNNDK…EEQKKEDESN (304 aa)) are Cytoplasmic-facing. Residues 100-128 (KRTERNNDKLEDLKTQKRKILEEVMETET) are a coiled coil. Residues 142–240 (ESKKKAEAEA…PGPGSGMRPP (99 aa)) are disordered. Polar residues predominate over residues 205–222 (SASTPAGASQAETPQQMM). The C4-type; plays a role in ER morphology zinc-finger motif lies at 276 to 301 (CQQCFSHNGMALKEEFEFVAFRCAYC). Residues 311–402 (RPQAPRLPEF…EEQKKEDESN (92 aa)) form a disordered region. Residues 321–330 (SFERRLRSES) show a composition bias toward basic and acidic residues. The span at 341 to 352 (TPEDSDAPEDDM) shows a compositional bias: acidic residues. Over residues 385–402 (PHAEAEALEEQKKEDESN) the composition is skewed to basic and acidic residues.

The protein belongs to the lunapark family. Homodimer; homodimerization requires the C4-type zinc finger motif and decreases during mitosis in a phosphorylation-dependent manner. Post-translationally, phosphorylated. Phosphorylation occurs during interphase. Phosphorylation also occurs during mitosis; these phosphorylations reduce both its homodimerization and the ER three-way tubular junction formation.

Its subcellular location is the endoplasmic reticulum membrane. In terms of biological role, endoplasmic reticulum (ER)-shaping membrane protein that plays a role in determining ER morphology. Involved in the stabilization of nascent three-way ER tubular junctions within the ER network. May also play a role as a curvature-stabilizing protein within three-way ER tubular junction network. In Danio rerio (Zebrafish), this protein is Endoplasmic reticulum junction formation protein lunapark-B (lnpkb).